We begin with the raw amino-acid sequence, 122 residues long: Large ribosomal subunit protein uL14 (122 aa).

It belongs to the universal ribosomal protein uL14 family. In terms of assembly, part of the 50S ribosomal subunit. Forms a cluster with proteins L3 and L19. In the 70S ribosome, L14 and L19 interact and together make contacts with the 16S rRNA in bridges B5 and B8.

Functionally, binds to 23S rRNA. Forms part of two intersubunit bridges in the 70S ribosome. This chain is Large ribosomal subunit protein uL14, found in Rippkaea orientalis (strain PCC 8801 / RF-1) (Cyanothece sp. (strain PCC 8801)).